Consider the following 516-residue polypeptide: MNEKIIIFDTTLRDGEQALLTSLTSNEKIQIALALERLGVDVIEVGFPVSSPGDFKSVQMLSKIIKNSKICSLARCLPNDITIAADAMQFSKNFRIHLFLGTSDLHVSSKLKKNFNEIIEMAVASVKQAKKFTNDIEFSCEDAGRTTLQNLYCIIEAVIKAGATTVNIPDTVGYTTPTQFKKIITMLFNHVKNIHQAIISVHCHNDLGMAVANSISAVEAGVRQIEGTMNGLGERAGNAALEEVIMTLNVHKNSLKVSTDINIKEIHRTSKIVSQFCNTPIPLNKAIIGKNVFSHSSGIHQDGVLKNRKNYEIIDPNSIGFTDYCSLNLTSRSGRAAVKHHMKKMGYENSDYNLNELYIDFLKLADKKGRIFDYDLEALAFFKKQQNTEEYYKLEYFDVQSKLSGLSTAYIVLICGSQTNIQKATTYNGPVDAIYQALNKATLYSIVLKKFHLEANGEGKDALGKVNIIVQYKLRNFHGVGLATDIIEASAQAMVNVLNYIWKSQQVNKELERLQK.

One can recognise a Pyruvate carboxyltransferase domain in the interval 5–267 (IIIFDTTLRD…STDINIKEIH (263 aa)). Positions 14, 202, 204, and 238 each coordinate Mn(2+). The segment at 393–516 (KLEYFDVQSK…VNKELERLQK (124 aa)) is regulatory domain.

Belongs to the alpha-IPM synthase/homocitrate synthase family. LeuA type 1 subfamily. In terms of assembly, homodimer. Requires Mn(2+) as cofactor.

The protein resides in the cytoplasm. The enzyme catalyses 3-methyl-2-oxobutanoate + acetyl-CoA + H2O = (2S)-2-isopropylmalate + CoA + H(+). Its pathway is amino-acid biosynthesis; L-leucine biosynthesis; L-leucine from 3-methyl-2-oxobutanoate: step 1/4. Its function is as follows. Catalyzes the condensation of the acetyl group of acetyl-CoA with 3-methyl-2-oxobutanoate (2-ketoisovalerate) to form 3-carboxy-3-hydroxy-4-methylpentanoate (2-isopropylmalate). In Buchnera aphidicola subsp. Cinara cedri (strain Cc), this protein is 2-isopropylmalate synthase.